The following is a 771-amino-acid chain: Semaphorin-3A (771 aa).

Residues Met-1–Ala-20 form the signal peptide. The region spanning Arg-31–Leu-514 is the Sema domain. Asn-53 carries N-linked (GlcNAc...) asparagine glycosylation. A disulfide bridge connects residues Cys-103 and Cys-114. Residue Asn-125 is glycosylated (N-linked (GlcNAc...) asparagine). 4 disulfides stabilise this stretch: Cys-132/Cys-141, Cys-269/Cys-381, Cys-293/Cys-341, and Cys-517/Cys-535. The region spanning Pro-580–Thr-664 is the Ig-like C2-type domain. A glycan (N-linked (GlcNAc...) asparagine) is linked at Asn-590. Cys-649 and Cys-722 are disulfide-bonded. A compositionally biased stretch (basic residues) spans Arg-728–Pro-737. The interval Arg-728–Val-771 is disordered. Basic and acidic residues predominate over residues His-749–Val-771.

Belongs to the semaphorin family. In terms of assembly, interacts with PLXND1. In terms of tissue distribution, expressed in the dorsal root ganglia.

The protein localises to the secreted. In terms of biological role, involved in the development of the olfactory system and in neuronal control of puberty. Induces the collapse and paralysis of neuronal growth cones. Could serve as a ligand that guides specific growth cones by a motility-inhibiting mechanism. Binds to the complex neuropilin-1/plexin-1. This chain is Semaphorin-3A (SEMA3A), found in Homo sapiens (Human).